The chain runs to 86 residues: Small ribosomal subunit protein bS20 (86 aa).

A compositionally biased stretch (basic and acidic residues) spans 1-18; sequence MANIKSQEKRIRTNERAR. The disordered stretch occupies residues 1–25; the sequence is MANIKSQEKRIRTNERARLRNQATK.

The protein belongs to the bacterial ribosomal protein bS20 family.

Its function is as follows. Binds directly to 16S ribosomal RNA. This Mycobacteroides abscessus (strain ATCC 19977 / DSM 44196 / CCUG 20993 / CIP 104536 / JCM 13569 / NCTC 13031 / TMC 1543 / L948) (Mycobacterium abscessus) protein is Small ribosomal subunit protein bS20.